The sequence spans 164 residues: MTEPAPTRIYVDADACPVKDEIYKVAERHGLPVSVVAGAFIRVPAHPLIERIAAGSGMDAADDWIAERVQPGDIVVTADVPLASRCVKAGAEVLAPNGKPFSEASIGMTLAVRNLMTDLRSSGEVTGGPRAFSPRDRSTFLAALDTTIRRIARRRASPPAQQQN.

Belongs to the UPF0178 family.

This is UPF0178 protein RPD_2254 from Rhodopseudomonas palustris (strain BisB5).